Consider the following 464-residue polypeptide: Serine/threonine-protein kinase 38-like (464 aa).

An N-acetylalanine modification is found at Ala-2. Residues 63–88 (KKLRRSQHARKETEFLRLKRTRLGLD) form an S100B binding region. At Thr-75 the chain carries Phosphothreonine. Residues 90–383 (FESLKVIGRG…VEEIKGHPFF (294 aa)) enclose the Protein kinase domain. ATP-binding positions include 96–104 (IGRGAFGEV) and Lys-119. The Proton acceptor role is filled by Asp-213. At Ser-282 the chain carries Phosphoserine; by autocatalysis. Residues 384–453 (EGVDWEHIRE…KRFEGLTQRG (70 aa)) enclose the AGC-kinase C-terminal domain. Thr-442 carries the phosphothreonine; by STK24/MST3 modification.

It belongs to the protein kinase superfamily. AGC Ser/Thr protein kinase family. Homodimeric S100B binds two molecules of STK38L. Interacts with MICAL1; leading to inhibit the protein kinase activity by antagonizing activation by MST1/STK4. Interacts with MOB1 and MOB2. It depends on Mg(2+) as a cofactor. As to expression, ubiquitously expressed with highest levels observed in the thymus.

It is found in the cytoplasm. The protein localises to the cytoskeleton. The protein resides in the membrane. It catalyses the reaction L-seryl-[protein] + ATP = O-phospho-L-seryl-[protein] + ADP + H(+). The enzyme catalyses L-threonyl-[protein] + ATP = O-phospho-L-threonyl-[protein] + ADP + H(+). Its activity is regulated as follows. Activated by binding of S100B which releases autoinhibitory N-lobe interactions, enabling ATP to bind and the autophosphorylation of Ser-282. Thr-442 then undergoes calcium-dependent phosphorylation by STK24/MST3. Interactions between phosphorylated Thr-442 and the N-lobe promote additional structural changes that complete the activation of the kinase. Autoinhibition is also released by the binding of MOB1/MOBKL1A and MOB2/HCCA2 to the N-terminal of STK38L. In terms of biological role, involved in the regulation of structural processes in differentiating and mature neuronal cells. The protein is Serine/threonine-protein kinase 38-like of Homo sapiens (Human).